Reading from the N-terminus, the 752-residue chain is Photosystem I P700 chlorophyll a apoprotein A1 (752 aa).

The next 8 membrane-spanning stretches (helical) occupy residues 73-96 (IFSAHFGHLAVVMVWLSGMIFHGA), 159-182 (LYVTAIGGLVLAGLFLFAGWFHYH), 198-222 (LNHHLQVLLGCGSLGWAGHLIHVSA), 294-312 (IAHHHLAIAVLFIVAGHQY), 349-372 (WHAQLATNLAFLGSLTIIIAHHMY), 388-414 (LCIFTHHIWIGGFLIVGGAAHAAIFMV), 436-458 (AIISHLNWVCIFLGFHSFGLYIH), and 533-551 (FLIHHIHAFTIHVTVLILL). [4Fe-4S] cluster is bound by residues Cys-575 and Cys-584. A run of 2 helical transmembrane segments spans residues 591–612 (HVFLGLFWMYNSLSIVIFHFSW) and 666–688 (LSAYGLLFLGAHFVWAFSLMFLF). A chlorophyll a'-binding site is contributed by His-677. Chlorophyll a is bound by residues Met-685 and Tyr-693. Trp-694 lines the phylloquinone pocket. The chain crosses the membrane as a helical span at residues 726-746 (AVGVAHYLLGGIATTWAFFHA).

This sequence belongs to the PsaA/PsaB family. The PsaA/B heterodimer binds the P700 chlorophyll special pair and subsequent electron acceptors. PSI consists of a core antenna complex that captures photons, and an electron transfer chain that converts photonic excitation into a charge separation. The cyanobacterial PSI reaction center is composed of one copy each of PsaA,B,C,D,E,F,I,J,K,L,M and X, and forms trimeric complexes. The cofactor is PSI electron transfer chain: 5 chlorophyll a, 1 chlorophyll a', 2 phylloquinones and 3 4Fe-4S clusters. PSI core antenna: 90 chlorophyll a, 22 carotenoids, 3 phospholipids and 1 galactolipid. P700 is a chlorophyll a/chlorophyll a' dimer, A0 is one or more chlorophyll a, A1 is one or both phylloquinones and FX is a shared 4Fe-4S iron-sulfur center..

The protein resides in the cellular thylakoid membrane. The enzyme catalyses reduced [plastocyanin] + hnu + oxidized [2Fe-2S]-[ferredoxin] = oxidized [plastocyanin] + reduced [2Fe-2S]-[ferredoxin]. In terms of biological role, psaA and PsaB bind P700, the primary electron donor of photosystem I (PSI), as well as the electron acceptors A0, A1 and FX. PSI is a plastocyanin/cytochrome c6-ferredoxin oxidoreductase, converting photonic excitation into a charge separation, which transfers an electron from the donor P700 chlorophyll pair to the spectroscopically characterized acceptors A0, A1, FX, FA and FB in turn. Oxidized P700 is reduced on the lumenal side of the thylakoid membrane by plastocyanin or cytochrome c6. This Nostoc punctiforme (strain ATCC 29133 / PCC 73102) protein is Photosystem I P700 chlorophyll a apoprotein A1.